Reading from the N-terminus, the 102-residue chain is Cytochrome b (102 aa).

3 helical membrane passes run 1–21, 45–66, and 81–101; these read FGSL…FLAM, WLIR…YLHI, and WNIG…GYVL. Residues His-51 and His-65 each contribute to the heme b site.

This sequence belongs to the cytochrome b family. In terms of assembly, the cytochrome bc1 complex contains 3 respiratory subunits (MT-CYB, CYC1 and UQCRFS1), 2 core proteins (UQCRC1 and UQCRC2) and probably 6 low-molecular weight proteins. Heme b is required as a cofactor.

Its subcellular location is the mitochondrion inner membrane. Its function is as follows. Component of the ubiquinol-cytochrome c reductase complex (complex III or cytochrome b-c1 complex) that is part of the mitochondrial respiratory chain. The b-c1 complex mediates electron transfer from ubiquinol to cytochrome c. Contributes to the generation of a proton gradient across the mitochondrial membrane that is then used for ATP synthesis. The sequence is that of Cytochrome b (mt-cyb) from Megalops atlanticus (Tarpon).